We begin with the raw amino-acid sequence, 411 residues long: MGKNDFLTPKAIANRIKAKGLQKLRWYCQMCQKQCRDENGFKCHCMSESHQRQMQVFGQNPTRVVDGYSEEFEQTFLDLMRRSHRFSRIAATVVYNEYINDRHHVHMNSTEWATLTEFIKHLGKTGKCKVEETPKGWFITYIDRDSETLFKERLKNKRVKSDLAEEEKQEREIQRQIERAAEKLNGGGGEGETSGNDEVVDDGDDERKKDEDLRLKSGVKVGFALGGGVKQVATGKERGESSKLLFGDEENDKVERGEKRKRSGDSGRSEKERRSALDELMKEEEKKKERMNRKDYWLFEGIIVKVMSKALAEKGYYKQKGVVKKVIDNYVGEIKMLDSKHVLRVDQKELETVLPQIGGMVKIVNGAYRGSNARLLGVDTEKFCAKVQIEKGVYDGRVIKSIEYEDICKLA.

The C2H2-type zinc finger occupies 28 to 50 (CQMCQKQCRDENGFKCHCMSESH). The interval 51–160 (QRQMQVFGQN…KERLKNKRVK (110 aa)) is winged helix-turn-helix (wHTH). Residues 147–183 (ETLFKERLKNKRVKSDLAEEEKQEREIQRQIERAAEK) adopt a coiled-coil conformation. Disordered regions lie at residues 182–211 (EKLN…KKDE) and 232–286 (VATG…EEEK). Residues 253-286 (KVERGEKRKRSGDSGRSEKERRSALDELMKEEEK) are compositionally biased toward basic and acidic residues. A Nuclear localization signal (NLS) motif is present at residues 259-262 (KRKR). Residues 265–294 (DSGRSEKERRSALDELMKEEEKKKERMNRK) adopt a coiled-coil conformation. The segment at 301 to 352 (GIIVKVMSKALAEKGYYKQKGVVKKVIDNYVGEIKMLDSKHVLRVDQKELET) is C-terminal subdomain A. Positions 358-409 (GGMVKIVNGAYRGSNARLLGVDTEKFCAKVQIEKGVYDGRVIKSIEYEDICK) are C-terminal subdomain B.

This sequence belongs to the KIN17 family. Interacts with SPL7. As to expression, expressed in root vasculature, lateral roots, cotyledons, rosette leaves, cauline leaves, stems, sepals, style of pistils, mature pollen grains and siliques.

It localises to the nucleus speckle. Functionally, promotes the copper deficiency response by direct interaction with SPL7. Acts with SPL7 in a common pathway to promote copper-responsive genes and alleviate oxidative stress during copper-limiting periods. May promote SPL7 function when copper is limiting. Participates in the control of general plant growth and development, and in the response to counteract the negative effects of UV radiation. The chain is KIN17-like protein from Arabidopsis thaliana (Mouse-ear cress).